A 406-amino-acid polypeptide reads, in one-letter code: Peptidase T (406 aa).

A Zn(2+)-binding site is contributed by histidine 78. Aspartate 80 is a catalytic residue. A Zn(2+)-binding site is contributed by aspartate 139. Residue glutamate 173 is the Proton acceptor of the active site. The Zn(2+) site is built by glutamate 174, aspartate 196, and histidine 378.

Belongs to the peptidase M20B family. Requires Zn(2+) as cofactor.

It is found in the cytoplasm. It carries out the reaction Release of the N-terminal residue from a tripeptide.. Its function is as follows. Cleaves the N-terminal amino acid of tripeptides. The polypeptide is Peptidase T (Clostridium perfringens (strain SM101 / Type A)).